Here is a 455-residue protein sequence, read N- to C-terminus: GTPase Der (455 aa).

EngA-type G domains follow at residues 4 to 169 and 178 to 355; these read PIVA…PKDQ and LRVS…GQHQ. Residues 10–17, 57–61, 120–123, 184–191, 233–237, and 298–301 each bind GTP; these read GRPNVGKS, DTGGL, NKLE, DTAGI, and NKWD. Positions 356 to 441 constitute a KH-like domain; it reads RRVSTSVLNE…PVRFIFRGKP (86 aa).

The protein belongs to the TRAFAC class TrmE-Era-EngA-EngB-Septin-like GTPase superfamily. EngA (Der) GTPase family. In terms of assembly, associates with the 50S ribosomal subunit.

Its function is as follows. GTPase that plays an essential role in the late steps of ribosome biogenesis. In Gloeobacter violaceus (strain ATCC 29082 / PCC 7421), this protein is GTPase Der.